The chain runs to 66 residues: DNA-directed RNA polymerase subunit Rpo10 (66 aa).

4 residues coordinate Zn(2+): Cys7, Cys10, Cys47, and Cys48.

The protein belongs to the archaeal Rpo10/eukaryotic RPB10 RNA polymerase subunit family. In terms of assembly, part of the RNA polymerase complex. Zn(2+) is required as a cofactor.

It is found in the cytoplasm. The enzyme catalyses RNA(n) + a ribonucleoside 5'-triphosphate = RNA(n+1) + diphosphate. In terms of biological role, DNA-dependent RNA polymerase (RNAP) catalyzes the transcription of DNA into RNA using the four ribonucleoside triphosphates as substrates. This is DNA-directed RNA polymerase subunit Rpo10 from Halobacterium salinarum (strain ATCC 29341 / DSM 671 / R1).